The sequence spans 536 residues: Arylsulfatase K (536 aa).

The first 22 residues, 1 to 22, serve as a signal peptide directing secretion; that stretch reads MLLLWVSVVAALALAVLAPGAG. Positions 40 and 80 each coordinate Ca(2+). The active-site Nucleophile is the cysteine 80. Position 80 is a 3-oxoalanine (Cys) (cysteine 80). The N-linked (GlcNAc...) asparagine glycan is linked to asparagine 108. Lysine 128 contacts substrate. N-linked (GlcNAc...) asparagine glycans are attached at residues asparagine 166 and asparagine 193. Histidine 251 serves as a coordination point for substrate. N-linked (GlcNAc...) asparagine glycosylation is present at asparagine 262. Ca(2+) contacts are provided by aspartate 313 and histidine 314. N-linked (GlcNAc...) asparagine glycans are attached at residues asparagine 375, asparagine 413, and asparagine 498.

Belongs to the sulfatase family. The cofactor is Ca(2+). The conversion to 3-oxoalanine (also known as C-formylglycine, FGly), of a serine or cysteine residue in prokaryotes and of a cysteine residue in eukaryotes, is critical for catalytic activity. In terms of processing, the 75-kDa precursor undergoes proteolytic processing to yield a 23 kDa form. Post-translationally, N-glycosylated with both high mannose and complex type sugars. As to expression, expressed at high levels in the placenta and pancreas. Expressed at intermediate levels in the lung, brain, heart, liver and kidney and at low levels in the muscle.

Its subcellular location is the secreted. It localises to the lysosome. It catalyses the reaction an aryl sulfate + H2O = a phenol + sulfate + H(+). The enzyme catalyses Hydrolysis of the 2-sulfate groups of the 2-O-sulfo-D-glucuronate residues of chondroitin sulfate, heparin and heparitin sulfate.. In terms of biological role, catalyzes the hydrolysis of pseudosubstrates such as p-nitrocatechol sulfate and p-nitrophenyl sulfate. Catalyzes the hydrolysis of the 2-sulfate groups of the 2-O-sulfo-D-glucuronate residues of chondroitin sulfate, heparin and heparitin sulfate. Acts selectively on 2-sulfoglucuronate and lacks activity against 2-sulfoiduronate. This is Arylsulfatase K (ARSK) from Homo sapiens (Human).